We begin with the raw amino-acid sequence, 1157 residues long: Hephaestin (1157 aa).

The signal sequence occupies residues 1 to 23 (MKAGHLLWALLLMHSLCSLPTDG). 6 Plastocyanin-like domains span residues 24–206 (AIRN…LITC), 218–366 (QRKD…VDSC), 370–559 (PPVE…LLVC), 569–717 (KQKG…VSQC), 730–902 (ASRV…LVIC), and 910–1066 (NGGR…SHEE). The Extracellular segment spans residues 24-1109 (AIRNYYLGIQ…PVKNVEILSS (1086 aa)). N-linked (GlcNAc...) asparagine glycans are attached at residues asparagine 49 and asparagine 54. The Na(+) site is built by glycine 70 and tyrosine 73. Positions 126 and 128 each coordinate Cu(2+). Histidine 126 contacts O2. Ca(2+) contacts are provided by lysine 134, aspartate 152, and aspartate 153. Residue asparagine 164 is glycosylated (N-linked (GlcNAc...) asparagine). Cysteines 180 and 206 form a disulfide. Cu(2+) contacts are provided by histidine 186 and histidine 188. An O2-binding site is contributed by histidine 186. Asparagine 236 carries an N-linked (GlcNAc...) asparagine glycan. Serine 265 serves as a coordination point for Na(+). An intrachain disulfide couples cysteine 285 to cysteine 366. Cu(2+) contacts are provided by histidine 304, cysteine 347, and histidine 352. Residues tyrosine 416, glycine 425, and tyrosine 428 each coordinate Na(+). Cysteine 533 and cysteine 559 are oxidised to a cystine. Residue asparagine 587 is glycosylated (N-linked (GlcNAc...) asparagine). Serine 616 is a Na(+) binding site. A disulfide bridge connects residues cysteine 636 and cysteine 717. Residues histidine 655, cysteine 698, histidine 703, and methionine 708 each coordinate Cu(2+). Residues asparagine 713 and asparagine 757 are each glycosylated (N-linked (GlcNAc...) asparagine). Residues phenylalanine 768 and glycine 777 each contribute to the Na(+) site. Residues cysteine 876 and cysteine 902 are joined by a disulfide bond. An N-linked (GlcNAc...) asparagine glycan is attached at asparagine 930. Residues histidine 999, histidine 1002, histidine 1004, histidine 1044, cysteine 1045, histidine 1046, histidine 1050, and methionine 1055 each contribute to the Cu(2+) site. Residues histidine 1002 and histidine 1004 each contribute to the O2 site. Histidine 1046 lines the O2 pocket. Residues 1110 to 1130 (ALIAICVVLLLIALALGGVVW) form a helical membrane-spanning segment. The Cytoplasmic portion of the chain corresponds to 1131–1157 (YQHRQRKLRRNRRSILDDSFKLLSLKQ). A phosphoserine mark is found at serine 1144, serine 1149, and serine 1154.

Belongs to the multicopper oxidase family. Part of a complex composed of SLC40A1/ferroportin, TF/transferrin and HEPH/hephaestin that transfers iron from cells to transferrin. It depends on Cu cation as a cofactor. In terms of tissue distribution, highly expressed in small intestine and colon.

The protein resides in the basolateral cell membrane. The enzyme catalyses 4 Fe(2+) + O2 + 4 H(+) = 4 Fe(3+) + 2 H2O. Functionally, plasma membrane ferroxidase that mediates the extracellular conversion of ferrous/Fe(2+) iron into its ferric/Fe(3+) form. Couples ferroportin which specifically exports ferrous/Fe(2+) iron from cells to transferrin that only binds and shuttles extracellular ferric/Fe(3+) iron throughout the body. By helping iron transfer from cells to blood mainly contributes to dietary iron absorption by the intestinal epithelium and more generally regulates iron levels in the body. This is Hephaestin from Rattus norvegicus (Rat).